Consider the following 127-residue polypeptide: Large ribosomal subunit protein bL17 (127 aa).

This sequence belongs to the bacterial ribosomal protein bL17 family. In terms of assembly, part of the 50S ribosomal subunit. Contacts protein L32.

The chain is Large ribosomal subunit protein bL17 from Alcanivorax borkumensis (strain ATCC 700651 / DSM 11573 / NCIMB 13689 / SK2).